The primary structure comprises 473 residues: H(+)/Cl(-) exchange transporter ClcA (473 aa).

Residues 1–32 (MKTDTPSLETPQAARLRRRQLIRQLLERDKTP) lie on the Cytoplasmic side of the membrane. The chain crosses the membrane as a helical span at residues 33–69 (LAILFMAAVVGTLVGLAAVAFDKGVAWLQNQRMEALV). At 70-76 (HTADNYP) the chain is on the periplasmic side. Residues 77–100 (LLLTVAFLCSAVLAMFGYFLVRKY) form a helical membrane-spanning segment. Residues 106-110 (GSGIP) carry the Selectivity filter part_1 motif. Ser-107 is a chloride binding site. The segment at residues 109–116 (IPEIEGAL) is an intramembrane region (helical). Over 117-123 (EDQRPVR) the chain is Cytoplasmic. Transmembrane regions (helical) follow at residues 124-141 (WWRVLPVKFFGGLGTLGG) and 148-166 (EGPTVQIGGNIGRMVLDIF). Residues 146-150 (GREGP) carry the Selectivity filter part_2 motif. Topologically, residues 167-176 (RLKGDEARHT) are cytoplasmic. Intramembrane regions (helical) lie at residues 177-189 (LLATGAAAGLAAA) and 193-201 (PLAGILFII). Residues 202 to 214 (EEMRPQFRYTLIS) lie on the Cytoplasmic side of the membrane. A helical membrane pass occupies residues 215–232 (IKAVFIGVIMSTIMYRIF). The Periplasmic portion of the chain corresponds to 233 to 252 (NHEVALIDVGKLSDAPLNTL). Residues 253 to 281 (WLYLILGIIFGIFGPIFNKWVLGMQDLLH) form a helical membrane-spanning segment. The Cytoplasmic segment spans residues 282-287 (RVHGGN). Residues 288-309 (ITKWVLMGGAIGGLCGLLGFVA) form a helical membrane-spanning segment. The Periplasmic portion of the chain corresponds to 310–329 (PATSGGGFNLIPIATAGNFS). 2 consecutive transmembrane segments (helical) span residues 330–349 (MGMLVFIFVARVITTLLCFS) and 355–376 (GIFAPMLALGTVLGTAFGMVVV). A Selectivity filter part_3 motif is present at residues 355–359 (GIFAP). Residues Ile-356 and Phe-357 each coordinate chloride. Over 377–386 (ELFPQYHLEA) the chain is Periplasmic. The helical intramembrane region spans 387-401 (GTFAIAGMGALLAAS). Residues 402-404 (IRA) constitute an intramembrane region (note=Loop between two helices). An intramembrane region (helical) is located at residues 405 to 416 (PLTGIILVLEMT). The segment at residues 417-421 (DNYQL) is an intramembrane region (note=Loop between two helices). Residues 422-438 (ILPMIITGLGATLLAQF) form a helical membrane-spanning segment. Residues 439–473 (TGGKPLYSEILARTLAKQEAEQLARSKAASASENT) lie on the Cytoplasmic side of the membrane. Tyr-445 is a binding site for chloride.

It belongs to the chloride channel (TC 2.A.49) family. ClcA subfamily. As to quaternary structure, homodimer.

It localises to the cell inner membrane. The catalysed reaction is 2 chloride(in) + H(+)(out) = 2 chloride(out) + H(+)(in). Proton-coupled chloride transporter. Functions as antiport system and exchanges two chloride ions for 1 proton. Probably acts as an electrical shunt for an outwardly-directed proton pump that is linked to amino acid decarboxylation, as part of the extreme acid resistance (XAR) response. The protein is H(+)/Cl(-) exchange transporter ClcA of Shigella boydii serotype 4 (strain Sb227).